Here is a 140-residue protein sequence, read N- to C-terminus: Large ribosomal subunit protein bL17 (140 aa).

The protein belongs to the bacterial ribosomal protein bL17 family. Part of the 50S ribosomal subunit. Contacts protein L32.

In Rhizobium johnstonii (strain DSM 114642 / LMG 32736 / 3841) (Rhizobium leguminosarum bv. viciae), this protein is Large ribosomal subunit protein bL17.